Reading from the N-terminus, the 156-residue chain is UPF0523 protein C (156 aa).

It belongs to the UPF0523 family.

In Dictyostelium discoideum (Social amoeba), this protein is UPF0523 protein C.